A 638-amino-acid polypeptide reads, in one-letter code: Zinc finger protein 143 (638 aa).

At Met1 the chain carries N-acetylmethionine. A Glycyl lysine isopeptide (Lys-Gly) (interchain with G-Cter in SUMO2) cross-link involves residue Lys213. C2H2-type zinc fingers lie at residues 237–261 (FRCE…ERSH), 267–291 (YQCE…VRTH), 297–321 (YRCS…IRTH), and 327–351 (FKCP…VRTH). A Phosphothreonine modification is found at Thr352. C2H2-type zinc fingers lie at residues 357–381 (YYCT…VRIH), 387–411 (YVCT…HVVH), and 417–440 (YNCN…RTAH). A Glycyl lysine isopeptide (Lys-Gly) (interchain with G-Cter in SUMO2) cross-link involves residue Lys406.

It belongs to the GLI C2H2-type zinc-finger protein family. In terms of assembly, interacts with CHD8. Forms a complex with HCFC1 and ZNF143. As to expression, expressed in all tissues tested, with the strongest expression in ovary.

It is found in the nucleus. In terms of biological role, transcriptional activator. Activates the gene for selenocysteine tRNA (tRNAsec). Binds to the SPH motif of small nuclear RNA (snRNA) gene promoters. Participates in efficient U6 RNA polymerase III transcription via its interaction with CHD8. In complex with HCFC1 and ZNF143, regulates the expression of several genes, including AP2S1, ESCO2, OPHN1, RBL1, UBXN8 and ZNF32. This chain is Zinc finger protein 143 (ZNF143), found in Homo sapiens (Human).